Reading from the N-terminus, the 256-residue chain is Probable aquaporin TIP-type alpha (256 aa).

At 1–24 (MATRRYSFGRTDEATHPDSMRASL) the chain is on the cytoplasmic side. Serine 7 carries the post-translational modification Phosphoserine; by CPK. A helical membrane pass occupies residues 25 to 44 (AEFASTFIFVFAGEGSGLAL). Residues 45 to 57 (VKIYQDSAFSAGE) lie on the Vacuolar side of the membrane. A helical transmembrane segment spans residues 58–77 (LLALALAHAFALFAAVSASM). At 78–102 (HVSGGHVNPAVSFGALIGGRISVIR) the chain is on the cytoplasmic side. The NPA 1 signature appears at 85 to 87 (NPA). A helical transmembrane segment spans residues 103-121 (AVYYWIAQLLGSIVAALVL). The Vacuolar segment spans residues 122-143 (RLVTNNMRPSGFHVSPGVGVGH). Residues 144–164 (MFILEVVMTFGLMYTVYGTAI) traverse the membrane as a helical segment. The Cytoplasmic portion of the chain corresponds to 165-169 (DPKRG). The helical transmembrane segment at 170-189 (AVSYIAPLAIGLIVGANILV) threads the bilayer. At 190–216 (GGPFDGACMNPALAFGPSLVGWQWHQH) the chain is on the vacuolar side. The short motif at 199–201 (NPA) is the NPA 2 element. A helical transmembrane segment spans residues 217–239 (WIFWVGPLLGAALAALVYEYAVI). Residues 240-256 (PIEPPPHHHQPLATEDY) lie on the Cytoplasmic side of the membrane.

This sequence belongs to the MIP/aquaporin (TC 1.A.8) family. TIP (TC 1.A.8.10) subfamily. In terms of processing, phosphorylated by a tonoplast-bound calcium-dependent protein kinase. As to expression, found in all seed tissues that are alive at seed maturity, but not in tissues that lose viability during seed maturation.

The protein localises to the vacuole membrane. Functionally, channel protein in tonoplast. These proteins may allow the diffusion of amino acids and/or peptides from the vacuolar compartment to the cytoplasm. This is Probable aquaporin TIP-type alpha from Phaseolus vulgaris (Kidney bean).